A 440-amino-acid chain; its full sequence is MTTTDPFDVLDPTAPVYTVTGGDWQDIVSDIADRHPDRIVVNMGPQHPSTHGVLRLVLELEGETVTQARVVVGYLHTGIEKNCEYRTYTQAVTFLTRADYLSPLFTETAYCLAVEKLLGITDQIPERANVIRVMMMELNRIASHLVWLATGGMEIGALSAMLYGFREREMILDIFEMITGLRMNHAYIRPGGVIQDLPPGAVEKIREFLDIMPARIDEYHDLLTGQPIWVRRLKGVGYLDLTGAVALGATGPIMRAAGYPWDLRKVAPYCGYETYDFEVPTQTDGDCFARYLVRMDEMRESLKIIEQCLDRLRPGPVMVEDKKIAWPAKLALGPDGMGNSLDHIRHIMATSMEALIHHFKLVTEGFHVPPGQVYVPVESPRGELGVHLVSDGGTKPYRVHLREPSFVNLQTVAAVCEGGMVADVIAAVASIDPVMGGCDR.

Belongs to the complex I 49 kDa subunit family. As to quaternary structure, NDH-1 is composed of 14 different subunits. Subunits NuoB, C, D, E, F, and G constitute the peripheral sector of the complex.

It is found in the cell membrane. It catalyses the reaction a quinone + NADH + 5 H(+)(in) = a quinol + NAD(+) + 4 H(+)(out). In terms of biological role, NDH-1 shuttles electrons from NADH, via FMN and iron-sulfur (Fe-S) centers, to quinones in the respiratory chain. The immediate electron acceptor for the enzyme in this species is believed to be a menaquinone. Couples the redox reaction to proton translocation (for every two electrons transferred, four hydrogen ions are translocated across the cytoplasmic membrane), and thus conserves the redox energy in a proton gradient. This chain is NADH-quinone oxidoreductase subunit D, found in Acidothermus cellulolyticus (strain ATCC 43068 / DSM 8971 / 11B).